A 116-amino-acid polypeptide reads, in one-letter code: uncharacterized protein (116 aa).

This is an uncharacterized protein from Methanocaldococcus jannaschii (strain ATCC 43067 / DSM 2661 / JAL-1 / JCM 10045 / NBRC 100440) (Methanococcus jannaschii).